The sequence spans 923 residues: Phosphoenolpyruvate carboxylase (923 aa).

Catalysis depends on residues histidine 149 and lysine 585.

Belongs to the PEPCase type 1 family. Mg(2+) serves as cofactor.

The catalysed reaction is oxaloacetate + phosphate = phosphoenolpyruvate + hydrogencarbonate. Forms oxaloacetate, a four-carbon dicarboxylic acid source for the tricarboxylic acid cycle. The sequence is that of Phosphoenolpyruvate carboxylase from Nocardia farcinica (strain IFM 10152).